A 314-amino-acid polypeptide reads, in one-letter code: MNKVEMTYSELIGNTSISNKQKVVMFTSEIKALIKIGIVNSNLITTIAGFLLAISFTSSSFMSNWGTFLLTIIGTALVIAGGCIVNNWYDVDIDPKMSRTKNRPTVTGFFSLKSVLTFGLLTTAVGLLLLMFTSWYATLFAFIGWFGYVVLYTIWSKRRYTLNTVIGSLSGAMPPLIGWAAISPSFHIVPFVMFLIMFIWQTPHFLALAMKKRDEYEAAGIPMLPVVRGMAVTKRQIIVYIACLLPLPFFLLPTMGITFAVIATLLNLGWLAIAFTGLFVDEDKKWANTIFIFSLNYLIILFPLMIIVKLPIFS.

8 helical membrane-spanning segments follow: residues 36-56 (IGIV…AISF), 65-85 (WGTF…GCIV), 114-134 (SVLT…MFTS), 135-155 (WYAT…YTIW), 179-199 (WAAI…IMFI), 237-257 (IIVY…TMGI), 259-279 (FAVI…TGLF), and 290-310 (IFIF…IVKL).

Belongs to the UbiA prenyltransferase family. Protoheme IX farnesyltransferase subfamily. As to quaternary structure, interacts with CtaA.

It localises to the cell membrane. The enzyme catalyses heme b + (2E,6E)-farnesyl diphosphate + H2O = Fe(II)-heme o + diphosphate. Its pathway is porphyrin-containing compound metabolism; heme O biosynthesis; heme O from protoheme: step 1/1. In terms of biological role, converts heme B (protoheme IX) to heme O by substitution of the vinyl group on carbon 2 of heme B porphyrin ring with a hydroxyethyl farnesyl side group. The protein is Protoheme IX farnesyltransferase of Oceanobacillus iheyensis (strain DSM 14371 / CIP 107618 / JCM 11309 / KCTC 3954 / HTE831).